The primary structure comprises 47 residues: Conotoxin Bu10 (47 aa).

A propeptide spanning residues 1 to 22 is cleaved from the precursor; it reads DSRGTQLHRALRKATILSVSAR. 3 disulfide bridges follow: Cys23–Cys37, Cys30–Cys41, and Cys36–Cys46. Position 46 is a cysteine amide (Cys46).

Belongs to the conotoxin O1 superfamily. As to expression, expressed by the venom duct.

Its subcellular location is the secreted. The sequence is that of Conotoxin Bu10 from Conus bullatus (Bubble cone).